Consider the following 283-residue polypeptide: Foldase protein PrsA 3 (283 aa).

A signal peptide spans 1-21 (MKKKKLFLGTIISCVVLALSA). Cysteine 22 is lipidated: N-palmitoyl cysteine. The S-diacylglycerol cysteine moiety is linked to residue cysteine 22. A PpiC domain is found at 132–222 (KPEMKVSHIL…YGYHIIKVTD (91 aa)).

It belongs to the PrsA family.

It is found in the cell membrane. It carries out the reaction [protein]-peptidylproline (omega=180) = [protein]-peptidylproline (omega=0). Plays a major role in protein secretion by helping the post-translocational extracellular folding of several secreted proteins. Important for the secretion of the protective antigen. The three PsrA proteins in this organism show different but overlapping substrate specificities. The sequence is that of Foldase protein PrsA 3 (prsA3) from Bacillus anthracis.